The sequence spans 60 residues: Large ribosomal subunit protein uL30 (60 aa).

Belongs to the universal ribosomal protein uL30 family. As to quaternary structure, part of the 50S ribosomal subunit.

The sequence is that of Large ribosomal subunit protein uL30 from Streptomyces filamentosus (Streptomyces roseosporus).